Reading from the N-terminus, the 20-residue chain is Brevinin-1T (20 aa).

A disulfide bridge connects residues cysteine 14 and cysteine 20.

It belongs to the frog skin active peptide (FSAP) family. Brevinin subfamily. In terms of tissue distribution, expressed by the skin glands.

It localises to the secreted. Antibacterial activity against representative Gram-negative and Gram-positive bacteria and exhibits a very high hemolytic activity. The protein is Brevinin-1T of Rana temporaria (European common frog).